We begin with the raw amino-acid sequence, 173 residues long: Membrane-bound hydrogenase subunit beta (173 aa).

It belongs to the complex I 30 kDa subunit family. As to quaternary structure, the membrane-bound hydrogenase complex is composed of MbhK and MbhL, and may also contain MbhJ. It depends on Ni(2+) as a cofactor.

The protein resides in the cell membrane. It catalyses the reaction H2 + 2 oxidized [2Fe-2S]-[ferredoxin] = 2 reduced [2Fe-2S]-[ferredoxin] + 2 H(+). With respect to regulation, inhibited by 0.1 mM Cu(2+). Its function is as follows. Beta subunit of a hydrogen-evolving hydrogenase that utilizes protons both as a substrate for hydrogen production and proton translocation. Acts by coupling the redox reaction via ferredoxin and iron-sulfur (Fe-S) clusters to proton translocation across the membrane thereby conserving the redox energy in a proton gradient. This chain is Membrane-bound hydrogenase subunit beta, found in Pyrococcus furiosus (strain ATCC 43587 / DSM 3638 / JCM 8422 / Vc1).